A 463-amino-acid chain; its full sequence is L-2-hydroxyglutarate dehydrogenase, mitochondrial (463 aa).

The transit peptide at 1–52 directs the protein to the mitochondrion; sequence MVPALRYLGSVCGRARGIFPGGFSAAHTPASGKSRLLCQGGRRASTSSFDIV. 2 positions are modified to N6-acetyllysine: Lys-104 and Lys-173.

This sequence belongs to the L2HGDH family. The cofactor is FAD.

Its subcellular location is the mitochondrion. It catalyses the reaction (S)-2-hydroxyglutarate + A = 2-oxoglutarate + AH2. The chain is L-2-hydroxyglutarate dehydrogenase, mitochondrial (L2HGDH) from Bos taurus (Bovine).